The primary structure comprises 328 residues: MDNASFSEPWPANASGPDPALSCSNASTLAPLPAPLAVAVPVVYAVICAVGLAGNSAVLYVLLRAPRMKTVTNLFILNLAIADELFTLVLPINIADFLLRQWPFGELMCKLIVAIDQYNTFSSLYFLTVMSADRYLVVLATAESRRVAGRTYSAARAVSLAVWGIVTLVVLPFAVFARLDDEQGRRQCVLVFPQPEAFWWRASRLYTLVLGFAIPVSTICVLYTTLLCRLHAMRLDSHAKALERAKKRVTFLVVAILAVCLLCWTPYHLSTVVALTTDLPQTPLVIAISYFITSLSYANSCLNPFLYAFLDASFRRNLRQLITCRAAA.

Residues 1-37 (MDNASFSEPWPANASGPDPALSCSNASTLAPLPAPLA) lie on the Extracellular side of the membrane. N-linked (GlcNAc...) asparagine glycans are attached at residues Asn3, Asn13, and Asn25. Residues 38-61 (VAVPVVYAVICAVGLAGNSAVLYV) traverse the membrane as a helical segment. Residues 62–72 (LLRAPRMKTVT) lie on the Cytoplasmic side of the membrane. The helical transmembrane segment at 73-97 (NLFILNLAIADELFTLVLPINIADF) threads the bilayer. Residues 98 to 112 (LLRQWPFGELMCKLI) are Extracellular-facing. Cysteines 109 and 188 form a disulfide. Residues 113-132 (VAIDQYNTFSSLYFLTVMSA) traverse the membrane as a helical segment. The Cytoplasmic segment spans residues 133–157 (DRYLVVLATAESRRVAGRTYSAARA). Residues 158–177 (VSLAVWGIVTLVVLPFAVFA) traverse the membrane as a helical segment. The Extracellular segment spans residues 178-202 (RLDDEQGRRQCVLVFPQPEAFWWRA). Residues 203–224 (SRLYTLVLGFAIPVSTICVLYT) form a helical membrane-spanning segment. Topologically, residues 225–248 (TLLCRLHAMRLDSHAKALERAKKR) are cytoplasmic. A helical membrane pass occupies residues 249 to 273 (VTFLVVAILAVCLLCWTPYHLSTVV). Residues 274-283 (ALTTDLPQTP) lie on the Extracellular side of the membrane. Residues 284–298 (LVIAISYFITSLSYA) traverse the membrane as a helical segment. The Cytoplasmic segment spans residues 299–328 (NSCLNPFLYAFLDASFRRNLRQLITCRAAA).

Belongs to the G-protein coupled receptor 1 family. Found in cerebellum and frontal cortex. Detected at high levels in hippocampus, amygdala and trachea; at moderate levels in fetal brain, pituitary gland and prostate. Not in caudate, accumbens, kidney or liver. Also detected at high levels in lung carcinoma.

The protein resides in the cell membrane. Its function is as follows. Interacts specifically with a number of opioid ligands. Receptor for neuropeptides B and W, which may be involved in neuroendocrine system regulation, food intake and the organization of other signals. Has a higher affinity for neuropeptide B. The sequence is that of Neuropeptides B/W receptor type 1 (NPBWR1) from Homo sapiens (Human).